Here is a 245-residue protein sequence, read N- to C-terminus: tRNA1(Val) (adenine(37)-N6)-methyltransferase (245 aa).

This sequence belongs to the methyltransferase superfamily. tRNA (adenine-N(6)-)-methyltransferase family.

Its subcellular location is the cytoplasm. It catalyses the reaction adenosine(37) in tRNA1(Val) + S-adenosyl-L-methionine = N(6)-methyladenosine(37) in tRNA1(Val) + S-adenosyl-L-homocysteine + H(+). Specifically methylates the adenine in position 37 of tRNA(1)(Val) (anticodon cmo5UAC). The protein is tRNA1(Val) (adenine(37)-N6)-methyltransferase of Escherichia coli (strain UTI89 / UPEC).